Reading from the N-terminus, the 279-residue chain is Shikimate dehydrogenase (NADP(+)) (279 aa).

Residues 16–18 (SRS) and Thr63 contribute to the shikimate site. Lys67 functions as the Proton acceptor in the catalytic mechanism. Asn88 and Asp103 together coordinate shikimate. NADP(+) contacts are provided by residues 128 to 132 (GAGGA) and Met219. Tyr221 contributes to the shikimate binding site. Gly243 is a binding site for NADP(+).

Belongs to the shikimate dehydrogenase family. In terms of assembly, homodimer.

It catalyses the reaction shikimate + NADP(+) = 3-dehydroshikimate + NADPH + H(+). The protein operates within metabolic intermediate biosynthesis; chorismate biosynthesis; chorismate from D-erythrose 4-phosphate and phosphoenolpyruvate: step 4/7. Functionally, involved in the biosynthesis of the chorismate, which leads to the biosynthesis of aromatic amino acids. Catalyzes the reversible NADPH linked reduction of 3-dehydroshikimate (DHSA) to yield shikimate (SA). The polypeptide is Shikimate dehydrogenase (NADP(+)) (Aromatoleum aromaticum (strain DSM 19018 / LMG 30748 / EbN1) (Azoarcus sp. (strain EbN1))).